The following is a 734-amino-acid chain: Myb-like protein J (734 aa).

Disordered stretches follow at residues 1-35, 128-196, and 221-378; these read MPNN…FKSN, QKDQ…PTMM, and SPIS…LKQG. Residues 131–142 are compositionally biased toward basic and acidic residues; sequence QQQKEQQKEQQK. A compositionally biased stretch (low complexity) spans 164-173; sequence TTTTTTTTTT. Positions 174–196 are enriched in polar residues; that stretch reads AVEQQGAEQQDTNLNSTSSPTMM. Residues 221 to 230 show a composition bias toward low complexity; it reads SPISSSLNNS. The span at 231 to 257 shows a compositional bias: polar residues; it reads QDNTKPVSPDNIENTSNPMDTSSSNGK. Over residues 258–372 the composition is skewed to low complexity; sequence TPTITPIVTP…GGKTNPTGKK (115 aa). The HTH myb-type domain occupies 371 to 426; it reads KKTSLKQGWTKEEHIRFLNGIQIHGKGAWKEIAQFVGTRTPTQIQSHAQKYYLRQK. The segment at residues 399–422 is a DNA-binding region (H-T-H motif); it reads WKEIAQFVGTRTPTQIQSHAQKYY. A compositionally biased stretch (low complexity) spans 445-454; the sequence is DDNLNNSNKN. Residues 445 to 623 form a disordered region; it reads DDNLNNSNKN…GNILRHQNSH (179 aa). The span at 455-468 shows a compositional bias: basic and acidic residues; it reads NVDKNKQDDKEKKT. Basic residues predominate over residues 469 to 478; that stretch reads QKTKKTKSKS. Composition is skewed to low complexity over residues 489 to 543 and 574 to 615; these read QQQQ…SSQT and NNNN…NEGN.

Its subcellular location is the nucleus. The protein is Myb-like protein J (mybJ) of Dictyostelium discoideum (Social amoeba).